Consider the following 533-residue polypeptide: CTP synthase (533 aa).

Residues 1 to 270 (MVHLAKYIVV…GDYIVRRIEL (270 aa)) are amidoligase domain. Ser16 is a binding site for CTP. UTP is bound at residue Ser16. 17-22 (SIGKGI) lines the ATP pocket. Residue Tyr57 coordinates L-glutamine. Asp74 contributes to the ATP binding site. Mg(2+) is bound by residues Asp74 and Glu144. CTP is bound by residues 151–153 (DIE), 191–196 (KTKPTQ), and Lys227. UTP contacts are provided by residues 191-196 (KTKPTQ) and Lys227. A Glutamine amidotransferase type-1 domain is found at 303 to 533 (YVELEDSYIS…FLRAALERSR (231 aa)). Gly355 contacts L-glutamine. Catalysis depends on Cys382, which acts as the Nucleophile; for glutamine hydrolysis. L-glutamine contacts are provided by residues 383–386 (LGMQ), Glu405, and Arg462. Active-site residues include His507 and Glu509.

It belongs to the CTP synthase family. Homotetramer.

It catalyses the reaction UTP + L-glutamine + ATP + H2O = CTP + L-glutamate + ADP + phosphate + 2 H(+). The enzyme catalyses L-glutamine + H2O = L-glutamate + NH4(+). The catalysed reaction is UTP + NH4(+) + ATP = CTP + ADP + phosphate + 2 H(+). It participates in pyrimidine metabolism; CTP biosynthesis via de novo pathway; CTP from UDP: step 2/2. Allosterically activated by GTP, when glutamine is the substrate; GTP has no effect on the reaction when ammonia is the substrate. The allosteric effector GTP functions by stabilizing the protein conformation that binds the tetrahedral intermediate(s) formed during glutamine hydrolysis. Inhibited by the product CTP, via allosteric rather than competitive inhibition. Functionally, catalyzes the ATP-dependent amination of UTP to CTP with either L-glutamine or ammonia as the source of nitrogen. Regulates intracellular CTP levels through interactions with the four ribonucleotide triphosphates. The protein is CTP synthase of Methanothermobacter thermautotrophicus (strain ATCC 29096 / DSM 1053 / JCM 10044 / NBRC 100330 / Delta H) (Methanobacterium thermoautotrophicum).